Here is a 197-residue protein sequence, read N- to C-terminus: Scoloptoxin SSD20 (197 aa).

The first 6 residues, 1–6, serve as a signal peptide directing secretion; the sequence is PPMTTE.

Expressed by the venom gland.

It is found in the secreted. Functionally, may act as a voltage-gated potassium channel inhibitor. Is highly similar to the subunit beta of SSD14 which, when complexed with subunit alpha, induces platelet aggregation and hemolysis. The chain is Scoloptoxin SSD20 from Scolopendra dehaani (Thai centipede).